The sequence spans 454 residues: Ribosomal protein uS12 methylthiotransferase RimO (454 aa).

Residues 19–129 form the MTTase N-terminal domain; it reads AKVGFVSLGC…VLAQVHEHVA (111 aa). [4Fe-4S] cluster contacts are provided by C28, C64, C93, C161, C165, and C168. The Radical SAM core domain maps to 147-384; sequence LTPKHYAYLK…MAVQAKISSD (238 aa). The TRAM domain maps to 387 to 453; the sequence is QVRIGQEYLI…EHDVWGVRVE (67 aa).

This sequence belongs to the methylthiotransferase family. RimO subfamily. [4Fe-4S] cluster is required as a cofactor.

The protein resides in the cytoplasm. It catalyses the reaction L-aspartate(89)-[ribosomal protein uS12]-hydrogen + (sulfur carrier)-SH + AH2 + 2 S-adenosyl-L-methionine = 3-methylsulfanyl-L-aspartate(89)-[ribosomal protein uS12]-hydrogen + (sulfur carrier)-H + 5'-deoxyadenosine + L-methionine + A + S-adenosyl-L-homocysteine + 2 H(+). Functionally, catalyzes the methylthiolation of an aspartic acid residue of ribosomal protein uS12. This Colwellia psychrerythraea (strain 34H / ATCC BAA-681) (Vibrio psychroerythus) protein is Ribosomal protein uS12 methylthiotransferase RimO.